The following is a 3483-amino-acid chain: Nonribosomal peptide synthetase Ao415 (3483 aa).

The segment at 281-669 (TFKKLNETSN…DVHPLIKDVV (389 aa)) is adenylation 1. A Carrier 1 domain is found at 775-851 (EVFDELSTKI…GLRDHVSGKK (77 aa)). The residue at position 812 (S812) is an O-(pantetheine 4'-phosphoryl)serine. The condensation 1 stretch occupies residues 886–1297 (ANVLPCSPMQ…YCLLHMLQNQ (412 aa)). The segment at 1363 to 1758 (TYRQFDDMGN…SADKDVAEIV (396 aa)) is adenylation 2. Residues 1865 to 1941 (EELSETEKVI…SLAKALSSAN (77 aa)) enclose the Carrier 2 domain. S1901 is modified (O-(pantetheine 4'-phosphoryl)serine). Residues 1981–2379 (IKPCTPLQEG…LLKNPEQEVA (399 aa)) are condensation 2. One can recognise a Carrier 3 domain in the interval 2412-2485 (TEAAVSIRRE…RMVVYLSSTK (74 aa)). The residue at position 2446 (S2446) is an O-(pantetheine 4'-phosphoryl)serine. The condensation 3 stretch occupies residues 2520–2917 (ESILPTTPLQ…MLQKIIGNPL (398 aa)). One can recognise a Carrier 4 domain in the interval 2954–3030 (DNYQNLERQV…KICLFLDKKQ (77 aa)). S2991 is modified (O-(pantetheine 4'-phosphoryl)serine). The segment at 3084–3368 (SEGRIFLPTF…VQEDLLKIST (285 aa)) is condensation 4.

It belongs to the NRP synthetase family.

It participates in siderophore biosynthesis. In terms of biological role, nonribosomal peptide synthetase; part of the gene cluster that mediates the biosynthesis of desferriferrichrome that chelates Fe(3+) to form ferrichrome. Fe(3+) is a key factor for induction of trap formation and the fungus uses the iron chelating desferriferrichrome to sequester Fe(3+) to inhibit trap formation and increase nematicidal activity. The biosynthesis of desferriferrichrome requires the action of the L-ornithine N(5)-oxygenase (LOO) Ao414 that hydroxylates L-ornithine at N(5), resulting in the formation of N(5)-hydroxyl-L-ornithine, which is subsequently N-acetylated to yield N(5)-acetyl-N(5)-hydroxy-L-ornithine (L-AHO). L-AHO harbors one hydroxamate moiety, which is the key core responsible for chelating iron. Then, L-AHO is further condensated with glycines to form desferriferrichrome through the NRPS protein Ao415. The polypeptide is Nonribosomal peptide synthetase Ao415 (Arthrobotrys oligospora (strain ATCC 24927 / CBS 115.81 / DSM 1491) (Nematode-trapping fungus)).